A 350-amino-acid polypeptide reads, in one-letter code: Derriere protein (350 aa).

Residues 1-16 form the signal peptide; the sequence is MLSLACFFSFLLMVKS. The propeptide occupies 17 to 236; sequence SPLTFQERML…SSCKTPRAKR (220 aa). Asn-171 and Asn-202 each carry an N-linked (GlcNAc...) asparagine glycan. 3 cysteine pairs are disulfide-bonded: Cys-249–Cys-315, Cys-278–Cys-347, and Cys-282–Cys-349.

This sequence belongs to the TGF-beta family. Homodimer; disulfide-linked. Also forms heterodimers with other TGF-beta family members including nodal2/nr-2 and bmp4.

It is found in the secreted. Functionally, required for posterior mesoderm formation during embryogenesis. Acts indirectly to suppress head formation by altering mesodermal patterning. Also involved in the establishment of left-right axis asymmetry, acting upstream of nodal/nr-1. Can exert long-range effects in the embryo. The chain is Derriere protein from Xenopus tropicalis (Western clawed frog).